Consider the following 544-residue polypeptide: Chaperonin GroEL 3 (544 aa).

ATP contacts are provided by residues 30-33 (TLGP), Lys-51, 87-91 (DGTTT), Gly-415, and Asp-496.

Belongs to the chaperonin (HSP60) family. Forms a cylinder of 14 subunits composed of two heptameric rings stacked back-to-back. Interacts with the co-chaperonin GroES.

Its subcellular location is the cytoplasm. The enzyme catalyses ATP + H2O + a folded polypeptide = ADP + phosphate + an unfolded polypeptide.. Together with its co-chaperonin GroES, plays an essential role in assisting protein folding. The GroEL-GroES system forms a nano-cage that allows encapsulation of the non-native substrate proteins and provides a physical environment optimized to promote and accelerate protein folding. This chain is Chaperonin GroEL 3, found in Rhizobium meliloti (strain 1021) (Ensifer meliloti).